The primary structure comprises 239 residues: Lactose-binding lectin-2 (239 aa).

Residues glutamate 122 and aspartate 124 each contribute to the Mn(2+) site. Ca(2+) is bound by residues aspartate 124, tyrosine 126, asparagine 128, and aspartate 131. Positions 131 and 137 each coordinate Mn(2+).

Belongs to the leguminous lectin family. As to quaternary structure, homotetramer. Seed.

It localises to the vacuole. Its subcellular location is the aleurone grain. In terms of biological role, lactose-binding lectin. Also binds derivatives of galactose, glucose, lactose, and mannose. Binds O-glycoproteins such as mucins more strongly than N-glycoproteins. Shows agglutinating activity towards rabbit erythrocytes. The chain is Lactose-binding lectin-2 from Cymbosema roseum (Dioclea purpurea).